Reading from the N-terminus, the 312-residue chain is Ribosomal RNA small subunit methyltransferase H (312 aa).

Residues 35–37 (GGH), aspartate 55, phenylalanine 80, aspartate 102, and glutamine 109 contribute to the S-adenosyl-L-methionine site.

The protein belongs to the methyltransferase superfamily. RsmH family.

It is found in the cytoplasm. It catalyses the reaction cytidine(1402) in 16S rRNA + S-adenosyl-L-methionine = N(4)-methylcytidine(1402) in 16S rRNA + S-adenosyl-L-homocysteine + H(+). In terms of biological role, specifically methylates the N4 position of cytidine in position 1402 (C1402) of 16S rRNA. The protein is Ribosomal RNA small subunit methyltransferase H of Pseudoalteromonas translucida (strain TAC 125).